A 215-amino-acid chain; its full sequence is Octanoyltransferase (215 aa).

The region spanning 35 to 210 (PDTPDQLWVV…HCLEAIVEYG (176 aa)) is the BPL/LPL catalytic domain. Residues 74 to 81 (RGGQVTYH), 141 to 143 (SVG), and 154 to 156 (GLA) each bind substrate. Cys-172 serves as the catalytic Acyl-thioester intermediate.

It belongs to the LipB family.

The protein localises to the cytoplasm. The enzyme catalyses octanoyl-[ACP] + L-lysyl-[protein] = N(6)-octanoyl-L-lysyl-[protein] + holo-[ACP] + H(+). It participates in protein modification; protein lipoylation via endogenous pathway; protein N(6)-(lipoyl)lysine from octanoyl-[acyl-carrier-protein]: step 1/2. Catalyzes the transfer of endogenously produced octanoic acid from octanoyl-acyl-carrier-protein onto the lipoyl domains of lipoate-dependent enzymes. Lipoyl-ACP can also act as a substrate although octanoyl-ACP is likely to be the physiological substrate. This is Octanoyltransferase from Alkalilimnicola ehrlichii (strain ATCC BAA-1101 / DSM 17681 / MLHE-1).